We begin with the raw amino-acid sequence, 424 residues long: MKPQWQQYINIIKQVVKPALGCTEPIAAAYAAAVARALLGVEPDSIAVQVSDNLYKNSMGVFVPGTGKIGLAIAAAAGAIAGNPDAGLEVLAVITPEQVARAQALIDAGKVTVERTETAEFIYCCVIAKKGDREALVKICGGHTLIAEKRLNGESVFSVDSTQAKATGSICEGVDITIESIYRFAQEVPFEEIKFILEASELNGKLSDEGMANPYGLEVGRTMKSGIAAGIIGEDLLNKIVMLTAAASDARMGGANLPAMSNLGSGNQGIAATIPVVLTAQCYKVSEEQLARALIMSHLGAIYIKSHYPPLSAFCGNTVTSAAASMAMVYLAGGSFEQSCFAIQNVISDSSGMVCDGAKASCAMKVSTSSSAAVRSFLMALSSHNVSGQGIIATDVEKTIKNIGKMILNGMSSTDVTIIDIMSA.

The protein belongs to the UPF0597 family.

The sequence is that of UPF0597 protein Sbal223_1296 from Shewanella baltica (strain OS223).